The sequence spans 333 residues: MCAQYCISFADVEKAHLNIQDSVHLTPVLTSSILNQIAGRNLFFKCELFQKTGSFKIRGALNAIRGLIPDTLEGKPKAVVTHSSGNHGQALTYAAKLEGIPAYIVVPQTAPNCKKLAIQAYGASIVYSEPSDESRENVAQRIIQETEGILVHPNQEPAVIAGQGTIALEVLNQVPLVDALVVPVGGGGMVAGIAITIKTLKPSVKVYAAEPSNADDCYQSKLKGELTPNLHPPETIADGVKSSIGLNTWPIIRDLVDDVFTVTEDEIKYATQLVWERMKLLIEPTAGVGLAAVLSQHFQTVSPEVKNICIVLSGGNVDLTSLSWVKQAERPAP.

Residue E13 participates in Mg(2+) binding. S31, S32, I33, K51, and T52 together coordinate ATP. K56 functions as the Proton acceptor in the catalytic mechanism. Residue K56 is modified to N6-(pyridoxal phosphate)lysine. Residue P69 coordinates Ca(2+). T71 carries the phosphothreonine modification. T81 contributes to the Ca(2+) binding site. S84 (proton acceptor) is an active-site residue. Pyridoxal 5'-phosphate is bound at residue N86. Q89 provides a ligand contact to ATP. C113 is subject to S-nitrosocysteine. Y121 contributes to the ATP binding site. N154 is a binding site for pyridoxal 5'-phosphate. D178 is a Mg(2+) binding site. Pyridoxal 5'-phosphate contacts are provided by G185, G186, G187, G188, and M189. Residues E210, A214, D216, and N247 each coordinate Mg(2+). Residues E210, A214, D216, and N247 each contribute to the Ca(2+) site. E210, A214, and D216 together coordinate Mn(2+). K279 is an ATP binding site. Pyridoxal 5'-phosphate is bound at residue S313. N316 provides a ligand contact to ATP.

It belongs to the serine/threonine dehydratase family. As to quaternary structure, homodimer. The cofactor is Mg(2+). Mn(2+) is required as a cofactor. Requires Ca(2+) as cofactor. Pyridoxal 5'-phosphate serves as cofactor. Post-translationally, S-nitrosylated, leading to decrease the enzyme activity. In terms of tissue distribution, expressed in the cerebellum and frontal cortex (at protein level).

The enzyme catalyses L-serine = D-serine. It carries out the reaction D-serine = pyruvate + NH4(+). It catalyses the reaction L-serine = pyruvate + NH4(+). With respect to regulation, allosterically activated by magnesium, and possibly also other divalent metal cations. Allosterically activated by ATP, ADP or GTP. Competitively inhibited by malonate. Catalyzes the synthesis of D-serine from L-serine. D-serine is a key coagonist with glutamate at NMDA receptors. Has dehydratase activity towards both L-serine and D-serine. The sequence is that of Serine racemase (Srr) from Rattus norvegicus (Rat).